A 432-amino-acid chain; its full sequence is Glutamate-1-semialdehyde 2,1-aminomutase 1 (432 aa).

Residue Lys268 is modified to N6-(pyridoxal phosphate)lysine.

It belongs to the class-III pyridoxal-phosphate-dependent aminotransferase family. HemL subfamily. Homodimer. The cofactor is pyridoxal 5'-phosphate.

It localises to the cytoplasm. The catalysed reaction is (S)-4-amino-5-oxopentanoate = 5-aminolevulinate. It functions in the pathway porphyrin-containing compound metabolism; protoporphyrin-IX biosynthesis; 5-aminolevulinate from L-glutamyl-tRNA(Glu): step 2/2. The protein is Glutamate-1-semialdehyde 2,1-aminomutase 1 of Bacillus mycoides (strain KBAB4) (Bacillus weihenstephanensis).